The primary structure comprises 362 residues: S-adenosylmethionine:tRNA ribosyltransferase-isomerase (362 aa).

It belongs to the QueA family. In terms of assembly, monomer.

The protein localises to the cytoplasm. The catalysed reaction is 7-aminomethyl-7-carbaguanosine(34) in tRNA + S-adenosyl-L-methionine = epoxyqueuosine(34) in tRNA + adenine + L-methionine + 2 H(+). The protein operates within tRNA modification; tRNA-queuosine biosynthesis. In terms of biological role, transfers and isomerizes the ribose moiety from AdoMet to the 7-aminomethyl group of 7-deazaguanine (preQ1-tRNA) to give epoxyqueuosine (oQ-tRNA). This is S-adenosylmethionine:tRNA ribosyltransferase-isomerase from Xanthobacter autotrophicus (strain ATCC BAA-1158 / Py2).